Reading from the N-terminus, the 272-residue chain is MMIRWKHRGGDIIFLMFTTLAAVSTASEHEHRTHMCSAEGNICSENAATVCRNNTCVSACSLRGMQECECDAEEDNYCYLCCGNSEHQCMAAHHHNILRPNGERWEREACSRCRMHGAELEGLPCDDTDSARLCIGGRCSNSVCHTKSPGSVCDRKMEKLCVDNTCENPCARYAPHLMVCDCPSIDQDTGFASEDRCQLCCYDFNLKPTNRRCQNAYRKYKIMDMFQKPIWRVGLECAGGKVCNKYGVCSSSHISFLVPFFSVILVSLISFI.

2 helical membrane-spanning segments follow: residues 9-29 (GGDI…ASEH) and 252-272 (SHIS…ISFI).

The protein localises to the membrane. This is an uncharacterized protein from Caenorhabditis elegans.